We begin with the raw amino-acid sequence, 384 residues long: S-adenosylmethionine synthase (384 aa).

ATP is bound at residue His15. Asp17 lines the Mg(2+) pocket. Residue Glu43 coordinates K(+). The L-methionine site is built by Glu56 and Gln99. A flexible loop region spans residues 99–109; sequence QSPDINQGVDR. Residues 164 to 166, 230 to 231, Asp239, 245 to 246, Ala262, and Lys266 contribute to the ATP site; these read DAK, RF, and RK. Residue Asp239 coordinates L-methionine. Lys270 contributes to the L-methionine binding site.

Belongs to the AdoMet synthase family. In terms of assembly, homotetramer; dimer of dimers. Mg(2+) is required as a cofactor. K(+) serves as cofactor.

The protein resides in the cytoplasm. It catalyses the reaction L-methionine + ATP + H2O = S-adenosyl-L-methionine + phosphate + diphosphate. It participates in amino-acid biosynthesis; S-adenosyl-L-methionine biosynthesis; S-adenosyl-L-methionine from L-methionine: step 1/1. Catalyzes the formation of S-adenosylmethionine (AdoMet) from methionine and ATP. The overall synthetic reaction is composed of two sequential steps, AdoMet formation and the subsequent tripolyphosphate hydrolysis which occurs prior to release of AdoMet from the enzyme. This chain is S-adenosylmethionine synthase, found in Salmonella arizonae (strain ATCC BAA-731 / CDC346-86 / RSK2980).